Here is a 778-residue protein sequence, read N- to C-terminus: Lon protease (778 aa).

The 202-residue stretch at 6–207 (LPLMALRDMV…TVISTLTSNI (202 aa)) folds into the Lon N-terminal domain. Position 356–363 (356–363 (GPPGVGKT)) interacts with ATP. In terms of domain architecture, Lon proteolytic spans 592-773 (EDQIGSTTGL…DQVLKHALVE (182 aa)). Active-site residues include serine 679 and lysine 722.

This sequence belongs to the peptidase S16 family. In terms of assembly, homohexamer. Organized in a ring with a central cavity.

The protein resides in the cytoplasm. It carries out the reaction Hydrolysis of proteins in presence of ATP.. Functionally, ATP-dependent serine protease that mediates the selective degradation of mutant and abnormal proteins as well as certain short-lived regulatory proteins. Required for cellular homeostasis and for survival from DNA damage and developmental changes induced by stress. Degrades polypeptides processively to yield small peptide fragments that are 5 to 10 amino acids long. Binds to DNA in a double-stranded, site-specific manner. The protein is Lon protease of Rickettsia felis (strain ATCC VR-1525 / URRWXCal2) (Rickettsia azadi).